The chain runs to 261 residues: Methylmalonyl-CoA decarboxylase (261 aa).

Residues 64–68 (AGHDI), Gly-110, Thr-132, and Lys-253 contribute to the substrate site.

This sequence belongs to the enoyl-CoA hydratase/isomerase family. Dimer of homotrimers.

It carries out the reaction (R)-methylmalonyl-CoA + H(+) = propanoyl-CoA + CO2. Catalyzes the decarboxylation of (R)-methylmalonyl-CoA to propionyl-CoA. Could be part of a pathway that converts succinate to propanoate. The sequence is that of Methylmalonyl-CoA decarboxylase (scpB) from Escherichia coli (strain K12).